Reading from the N-terminus, the 506-residue chain is ESX-5 secretion system ATPase EccB5 (506 aa).

The chain crosses the membrane as a helical span at residues 56–76 (VVASVSAALVICLGALLWSFI).

Belongs to the EccB family. As to quaternary structure, part of the ESX-5 / type VII secretion system (T7SS), which is composed of cytosolic and membrane components. The ESX-5 membrane complex is composed of EccB5, EccC5, EccD5 and EccE5.

Its subcellular location is the cell inner membrane. Its function is as follows. An ATPase. Part of the ESX-5 specialized secretion system, which is responsible for the secretion of EsxN and a number of PE_PGRS and PPE proteins, including PPE41. In Mycobacterium tuberculosis (strain CDC 1551 / Oshkosh), this protein is ESX-5 secretion system ATPase EccB5.